The primary structure comprises 192 residues: dCTP deaminase, dUMP-forming (192 aa).

DCTP-binding positions include 101 to 106 (KSSLGR), Asp-119, 127 to 129 (TLE), Gln-148, Tyr-162, and Gln-174. Residue Glu-129 is the Proton donor/acceptor of the active site. The segment at 169 to 192 (SRYQGQRGPTPSRSWQSWRTWPTR) is disordered. Positions 171-192 (YQGQRGPTPSRSWQSWRTWPTR) are enriched in polar residues.

Belongs to the dCTP deaminase family. As to quaternary structure, homotrimer.

It catalyses the reaction dCTP + 2 H2O = dUMP + NH4(+) + diphosphate. Its pathway is pyrimidine metabolism; dUMP biosynthesis; dUMP from dCTP: step 1/1. Functionally, bifunctional enzyme that catalyzes both the deamination of dCTP to dUTP and the hydrolysis of dUTP to dUMP without releasing the toxic dUTP intermediate. This Salinispora tropica (strain ATCC BAA-916 / DSM 44818 / JCM 13857 / NBRC 105044 / CNB-440) protein is dCTP deaminase, dUMP-forming.